The following is a 62-amino-acid chain: Photosystem II reaction center protein Z (62 aa).

A run of 2 helical transmembrane segments spans residues A8–A28 and L41–V61.

Belongs to the PsbZ family. In terms of assembly, PSII is composed of 1 copy each of membrane proteins PsbA, PsbB, PsbC, PsbD, PsbE, PsbF, PsbH, PsbI, PsbJ, PsbK, PsbL, PsbM, PsbT, PsbX, PsbY, PsbZ, Psb30/Ycf12, peripheral proteins PsbO, CyanoQ (PsbQ), PsbU, PsbV and a large number of cofactors. It forms dimeric complexes.

The protein localises to the cellular thylakoid membrane. Its function is as follows. May control the interaction of photosystem II (PSII) cores with the light-harvesting antenna, regulates electron flow through the 2 photosystem reaction centers. PSII is a light-driven water plastoquinone oxidoreductase, using light energy to abstract electrons from H(2)O, generating a proton gradient subsequently used for ATP formation. In Synechococcus elongatus (strain ATCC 33912 / PCC 7942 / FACHB-805) (Anacystis nidulans R2), this protein is Photosystem II reaction center protein Z.